Here is a 271-residue protein sequence, read N- to C-terminus: Beta-lysine N(6)-acetyltransferase (271 aa).

Positions 86–122 are disordered; sequence LRKDRGTGKNQKKKKISRKKDNWKKRKEKSRLPEGYT. Residues 95–114 are compositionally biased toward basic residues; the sequence is NQKKKKISRKKDNWKKRKEK. An N-acetyltransferase domain is found at 121–269; it reads YTLRPAVQAD…GFEDMNIWCR (149 aa).

The protein belongs to the acetyltransferase family.

It carries out the reaction (3S)-3,6-diaminohexanoate + acetyl-CoA = (3S)-6-acetamido-3-aminohexanoate + CoA + H(+). In terms of biological role, catalyzes the acetylation of beta-lysine to N6-acetyl-beta-lysine, a compatible solute produced by methanogenic archaea that helps cells to cope with salt stress. The protein is Beta-lysine N(6)-acetyltransferase of Methanosarcina mazei (strain ATCC BAA-159 / DSM 3647 / Goe1 / Go1 / JCM 11833 / OCM 88) (Methanosarcina frisia).